The sequence spans 477 residues: Bifunctional protein HldE (477 aa).

Residues 1–318 form a ribokinase region; the sequence is MKVTLPEFER…ENAVRGRADT (318 aa). The residue at position 179 (Lys-179) is an N6-acetyllysine. 195–198 is a binding site for ATP; sequence NLSE. Residue Asp-264 is part of the active site. A cytidylyltransferase region spans residues 344–477; that stretch reads MTNGVFDILH…IKKIQQDKKG (134 aa).

This sequence in the N-terminal section; belongs to the carbohydrate kinase PfkB family. In the C-terminal section; belongs to the cytidylyltransferase family. Homodimer.

It carries out the reaction D-glycero-beta-D-manno-heptose 7-phosphate + ATP = D-glycero-beta-D-manno-heptose 1,7-bisphosphate + ADP + H(+). It catalyses the reaction D-glycero-beta-D-manno-heptose 1-phosphate + ATP + H(+) = ADP-D-glycero-beta-D-manno-heptose + diphosphate. The protein operates within nucleotide-sugar biosynthesis; ADP-L-glycero-beta-D-manno-heptose biosynthesis; ADP-L-glycero-beta-D-manno-heptose from D-glycero-beta-D-manno-heptose 7-phosphate: step 1/4. It functions in the pathway nucleotide-sugar biosynthesis; ADP-L-glycero-beta-D-manno-heptose biosynthesis; ADP-L-glycero-beta-D-manno-heptose from D-glycero-beta-D-manno-heptose 7-phosphate: step 3/4. Catalyzes the phosphorylation of D-glycero-D-manno-heptose 7-phosphate at the C-1 position to selectively form D-glycero-beta-D-manno-heptose-1,7-bisphosphate. Functionally, catalyzes the ADP transfer from ATP to D-glycero-beta-D-manno-heptose 1-phosphate, yielding ADP-D-glycero-beta-D-manno-heptose. The polypeptide is Bifunctional protein HldE (Escherichia coli O9:H4 (strain HS)).